Consider the following 256-residue polypeptide: MAKNQNRIRNRWELITCGLGGHVTYAPDDAALAARLRASTGLGEVWRCLRCGDFALGGPQGRGAPEDAPLIMRGKALRQAIIIRALGVERLVRALVLALAAWAVWEFRGARGAIQATLDRDLPVLRAAGFKVDQMTVIHALEKALAAKPSTLALITGMLAAYAVLQAVEGVGLWLLKRWGEYFAVVATSIFLPLEVHDLAKGITTTRVVTFSINVAAVVYLLISKRLFGVRGGRKAYDVERRGEQLLDLERAAMLT.

Helical transmembrane passes span 155 to 175 (ITGMLAAYAVLQAVEGVGLWL) and 203 to 223 (ITTTRVVTFSINVAAVVYLLI).

It localises to the cell membrane. This is an uncharacterized protein from Mycobacterium bovis (strain ATCC BAA-935 / AF2122/97).